The primary structure comprises 215 residues: Ras-related protein Rab-5A (215 aa).

GTP-binding residues include Ser-29, Ala-30, Gly-32, Lys-33, Ser-34, Ser-35, His-46, Glu-47, Thr-52, and Gly-78. Ser-34 contacts Mg(2+). Short sequence motifs (switch) lie at residues 44–56 and 77–93; these read QFHE…IGAA and AGQE…YRGA. Mg(2+) is bound at residue Thr-52. At Ser-84 the chain carries Phosphoserine. GTP contacts are provided by Asn-133, Lys-134, Asp-136, Ala-164, and Lys-165. The tract at residues 181–215 is disordered; it reads LPKNEPQNPGANSARGRGVDLTEPTQPTRSQCCSN. The span at 203-215 shows a compositional bias: polar residues; the sequence is EPTQPTRSQCCSN. Residues Cys-212 and Cys-213 are each lipidated (S-geranylgeranyl cysteine).

This sequence belongs to the small GTPase superfamily. Rab family. Interacts with GDI1; this promotes dissociation from membranes; phosphorylation at Ser-84 disrupts this interaction. Interacts with GDI2; phosphorylation at Ser-84 disrupts the interaction. Binds EEA1. Interacts with ALS2CL, SUN2, ZFYVE20 and RUFY1. Interacts with RIN1 and GAPVD1, which regulate its pathway, probably by acting as a GEF. Interacts with SGSM1 and SGSM3. Interacts with PIK3CB. Interacts with RABEP1 and RINL. Interacts with OCRL and INPP5F. May be a component of a complex composed of RAB5A, DYN2 and PIK3C3. Does not interact with the BLOC-3 complex (heterodimer of HPS1 and HPS4). Interacts with CLN5. Interacts with APPL2. Interacts with F8A1/F8A2/F8A3. Found in a complex with F8A1/F8A2/F8A3, HTT and RAB5A; mediates the recruitment of HTT by RAB5A onto early endosomes. Interacts with ATP9A. Interacts with PPP1R21; mediates the recruitment of FERRY complex by RAB5A onto early endosomes. Requires Mg(2+) as cofactor. In terms of processing, phosphorylation of Ser-84 in the switch II region by LRRK2 prevents the association of RAB regulatory proteins, including RAB GDP dissociation inhibitors GDI1 and GDI2.

It localises to the cell membrane. Its subcellular location is the early endosome membrane. It is found in the melanosome. The protein localises to the cytoplasmic vesicle. The protein resides in the cell projection. It localises to the ruffle. Its subcellular location is the cytoplasm. It is found in the cytosol. The protein localises to the membrane. The protein resides in the phagosome membrane. It localises to the endosome membrane. The enzyme catalyses GTP + H2O = GDP + phosphate + H(+). With respect to regulation, regulated by guanine nucleotide exchange factors (GEFs) including RINL, which promote the exchange of bound GDP for free GTP. Regulated by GTPase activating proteins (GAPs) which increase the GTP hydrolysis activity. Inhibited by GDP dissociation inhibitors (GDIs). Its function is as follows. The small GTPases Rab are key regulators of intracellular membrane trafficking, from the formation of transport vesicles to their fusion with membranes. Rabs cycle between an inactive GDP-bound form and an active GTP-bound form that is able to recruit to membranes different sets of downstream effectors directly responsible for vesicle formation, movement, tethering and fusion. RAB5A is required for the fusion of plasma membranes and early endosomes. Contributes to the regulation of filopodia extension. Required for the exosomal release of SDCBP, CD63, PDCD6IP and syndecan. Regulates maturation of apoptotic cell-containing phagosomes, probably downstream of DYN2 and PIK3C3. This Canis lupus familiaris (Dog) protein is Ras-related protein Rab-5A (RAB5A).